Consider the following 94-residue polypeptide: Small ribosomal subunit protein uS17 (94 aa).

The protein belongs to the universal ribosomal protein uS17 family. Part of the 30S ribosomal subunit.

One of the primary rRNA binding proteins, it binds specifically to the 5'-end of 16S ribosomal RNA. This Symbiobacterium thermophilum (strain DSM 24528 / JCM 14929 / IAM 14863 / T) protein is Small ribosomal subunit protein uS17.